The following is an 869-amino-acid chain: H(+)/Cl(-) exchange transporter 6 (869 aa).

Topologically, residues 1–80 are cytoplasmic; it reads MAGCRGSLCC…KKGRRYEAVK (80 aa). Transmembrane regions (helical) follow at residues 81 to 113 and 128 to 150; these read WMVV…FGVV and LSLL…LVLI. The Selectivity filter part_1 motif lies at 156–160; the sequence is GSGIP. Ser157 lines the chloride pocket. Residues 159–166 constitute an intramembrane region (helical); it reads IPEVKCYL. 2 helical membrane-spanning segments follow: residues 176-194 and 200-217; these read RLRT…VAGG and EGPM…LPQF. A Selectivity filter part_2 motif is present at residues 198-202; the sequence is EKEGP. 2 intramembrane regions (helical) span residues 241–253 and 257–265; these read FVSA…VAAA and PIGGTLFSL. 3 consecutive transmembrane segments (helical) span residues 277-294, 335-364, and 371-392; these read TWKV…LNFF, GFFV…YRMR, and KLVR…VFVA. 3 N-linked (GlcNAc...) asparagine glycosylation sites follow: Asn410, Asn422, and Asn432. The next 2 helical transmembrane spans lie at 462-481 and 487-511; these read PVTL…WTYG and GLFV…KSYI. The short motif at 487 to 491 is the Selectivity filter part_3 element; that stretch reads GLFVP. A chloride-binding site is contributed by Phe489. The segment at residues 519–533 is an intramembrane region (helical); sequence GTFALIGAAAFLGGV. Residues 534–536 constitute an intramembrane region (note=Loop between two helices); it reads VRM. The helical intramembrane region spans 537–548; it reads TISLTVILIEST. Positions 549 to 552 form an intramembrane region, note=Loop between two helices; that stretch reads NEIT. The chain crosses the membrane as a helical span at residues 553-571; that stretch reads YGLPIMVTLMVAKWTGDFF. The Cytoplasmic portion of the chain corresponds to 572-869; sequence NKGIYDIHVG…ARLRQHYQTI (298 aa). Tyr576 contributes to the chloride binding site. One can recognise a CBS 1 domain in the interval 605-662; the sequence is MEPNLTYVYPHTRIQSLVSILRTTVHHAFPVVTENRGNEKEFMKGNQLISNNIKFKKS. 630–632 serves as a coordination point for ATP; sequence HHA. A Phosphoserine modification is found at Ser773. The CBS 2 domain occupies 807 to 868; it reads MNPSPFTVSP…QARLRQHYQT (62 aa). 849–852 serves as a coordination point for ATP; the sequence is TRHN.

The protein belongs to the chloride channel (TC 2.A.49) family. ClC-6/CLCN6 subfamily. In terms of processing, N-glycosylated on several asparagine residues. Testis, ovary, small intestine, brain and skeletal muscle. Low level expression in aortic and coronary vascular smooth muscle cells, and aortic endothelial cells. Isoform 3 is only detected in kidney.

Its subcellular location is the late endosome membrane. The catalysed reaction is 2 chloride(in) + H(+)(out) = 2 chloride(out) + H(+)(in). Its function is as follows. Voltage-gated channel mediating the exchange of chloride ions against protons. Functions as antiporter and contributes to the acidification of the late endosome lumen. The CLC channel family contains both chloride channels and proton-coupled anion transporters that exchange chloride or another anion for protons. The presence of conserved gating glutamate residues is typical for family members that function as antiporters. The sequence is that of H(+)/Cl(-) exchange transporter 6 from Homo sapiens (Human).